Consider the following 255-residue polypeptide: Large ribosomal subunit protein uL2 (255 aa).

A disordered region spans residues 211-235; it reads PHGGGNHQHVGHATTTKRDDPAGKK.

The protein belongs to the universal ribosomal protein uL2 family.

This chain is Large ribosomal subunit protein uL2 (rpl8), found in Dictyostelium discoideum (Social amoeba).